We begin with the raw amino-acid sequence, 476 residues long: Bifunctional protein HldE (476 aa).

The interval M1–T318 is ribokinase. N195–E198 provides a ligand contact to ATP. The active site involves D264. A cytidylyltransferase region spans residues M344–G476.

This sequence in the N-terminal section; belongs to the carbohydrate kinase PfkB family. In the C-terminal section; belongs to the cytidylyltransferase family. In terms of assembly, homodimer.

It carries out the reaction D-glycero-beta-D-manno-heptose 7-phosphate + ATP = D-glycero-beta-D-manno-heptose 1,7-bisphosphate + ADP + H(+). The enzyme catalyses D-glycero-beta-D-manno-heptose 1-phosphate + ATP + H(+) = ADP-D-glycero-beta-D-manno-heptose + diphosphate. The protein operates within nucleotide-sugar biosynthesis; ADP-L-glycero-beta-D-manno-heptose biosynthesis; ADP-L-glycero-beta-D-manno-heptose from D-glycero-beta-D-manno-heptose 7-phosphate: step 1/4. Its pathway is nucleotide-sugar biosynthesis; ADP-L-glycero-beta-D-manno-heptose biosynthesis; ADP-L-glycero-beta-D-manno-heptose from D-glycero-beta-D-manno-heptose 7-phosphate: step 3/4. Its function is as follows. Catalyzes the phosphorylation of D-glycero-D-manno-heptose 7-phosphate at the C-1 position to selectively form D-glycero-beta-D-manno-heptose-1,7-bisphosphate. Functionally, catalyzes the ADP transfer from ATP to D-glycero-beta-D-manno-heptose 1-phosphate, yielding ADP-D-glycero-beta-D-manno-heptose. This Vibrio atlanticus (strain LGP32) (Vibrio splendidus (strain Mel32)) protein is Bifunctional protein HldE.